Consider the following 222-residue polypeptide: Glutathione S-transferase A4 (222 aa).

Met1 carries the post-translational modification N-acetylmethionine. Residues 3 to 83 (AKPKLYYFNG…YLAAKYNLYG (81 aa)) enclose the GST N-terminal domain. Glutathione contacts are provided by residues Tyr9, 53–55 (GQV), and 66–68 (TQT). The GST C-terminal domain occupies 85–208 (DLKERVRIDM…QPGSQRKPPP (124 aa)).

The protein belongs to the GST superfamily. Alpha family. In terms of assembly, homodimer. In terms of processing, the N-terminus is blocked.

The protein resides in the cytoplasm. It carries out the reaction RX + glutathione = an S-substituted glutathione + a halide anion + H(+). Its function is as follows. Conjugation of reduced glutathione to a wide number of exogenous and endogenous hydrophobic electrophiles. The sequence is that of Glutathione S-transferase A4 (Gsta4) from Mus musculus (Mouse).